The following is a 429-amino-acid chain: Histidine--tRNA ligase (429 aa).

Belongs to the class-II aminoacyl-tRNA synthetase family. As to quaternary structure, homodimer.

It localises to the cytoplasm. The enzyme catalyses tRNA(His) + L-histidine + ATP = L-histidyl-tRNA(His) + AMP + diphosphate + H(+). The sequence is that of Histidine--tRNA ligase from Pseudomonas savastanoi pv. phaseolicola (strain 1448A / Race 6) (Pseudomonas syringae pv. phaseolicola (strain 1448A / Race 6)).